The following is a 214-amino-acid chain: Putative AgrB-like protein (214 aa).

5 consecutive transmembrane segments (helical) span residues 41–61 (IISVFIIGLLFNIALEALIFL), 82–102 (CTLLGIIISICIGFLVKSSFF), 109–129 (IIVFIGIVIFVFGYFIVFKFA), 154–174 (ILTIYLFIEILSIILYYNLGW), and 182–202 (LSIILGVAWQCITLTYIGNIL).

It belongs to the AgrB family.

The protein localises to the cell membrane. Its function is as follows. May be involved in the proteolytic processing of a quorum sensing system signal molecule precursor. The protein is Putative AgrB-like protein of Clostridium perfringens (strain SM101 / Type A).